Consider the following 314-residue polypeptide: DNA-directed RNA polymerase subunit alpha (314 aa).

Positions 1-228 (MIEIEKPKIE…EHLNIFVGLT (228 aa)) are alpha N-terminal domain (alpha-NTD). An alpha C-terminal domain (alpha-CTD) region spans residues 245–314 (KEKVLEMTIE…ELGLGLRKDD (70 aa)).

Belongs to the RNA polymerase alpha chain family. Homodimer. The RNAP catalytic core consists of 2 alpha, 1 beta, 1 beta' and 1 omega subunit. When a sigma factor is associated with the core the holoenzyme is formed, which can initiate transcription.

It carries out the reaction RNA(n) + a ribonucleoside 5'-triphosphate = RNA(n+1) + diphosphate. In terms of biological role, DNA-dependent RNA polymerase catalyzes the transcription of DNA into RNA using the four ribonucleoside triphosphates as substrates. This Bacillus licheniformis (strain ATCC 14580 / DSM 13 / JCM 2505 / CCUG 7422 / NBRC 12200 / NCIMB 9375 / NCTC 10341 / NRRL NRS-1264 / Gibson 46) protein is DNA-directed RNA polymerase subunit alpha.